Reading from the N-terminus, the 251-residue chain is Triosephosphate isomerase (251 aa).

Position 9-11 (Asn9–Lys11) interacts with substrate. The active-site Electrophile is the His95. Glu167 (proton acceptor) is an active-site residue. Substrate is bound by residues Gly173, Ser213, and Gly234 to Gly235.

This sequence belongs to the triosephosphate isomerase family. As to quaternary structure, homodimer.

It localises to the cytoplasm. It catalyses the reaction D-glyceraldehyde 3-phosphate = dihydroxyacetone phosphate. It participates in carbohydrate biosynthesis; gluconeogenesis. The protein operates within carbohydrate degradation; glycolysis; D-glyceraldehyde 3-phosphate from glycerone phosphate: step 1/1. Functionally, involved in the gluconeogenesis. Catalyzes stereospecifically the conversion of dihydroxyacetone phosphate (DHAP) to D-glyceraldehyde-3-phosphate (G3P). This is Triosephosphate isomerase from Ligilactobacillus salivarius (strain UCC118) (Lactobacillus salivarius).